We begin with the raw amino-acid sequence, 228 residues long: Endo-1,4-beta-xylanase A (228 aa).

An N-terminal signal peptide occupies residues 1 to 27 (MNLRKLRLLFVMCIGLTLILTAVPAHA). The region spanning 29–222 (TITNNEMGNH…SSGSANVMTN (194 aa)) is the GH11 domain. Glu120 functions as the Nucleophile in the catalytic mechanism. Residue Glu209 is the Proton donor of the active site.

It belongs to the glycosyl hydrolase 11 (cellulase G) family.

It carries out the reaction Endohydrolysis of (1-&gt;4)-beta-D-xylosidic linkages in xylans.. The protein operates within glycan degradation; xylan degradation. This Bacillus pumilus (Bacillus mesentericus) protein is Endo-1,4-beta-xylanase A (xynA).